The primary structure comprises 314 residues: Olfactory receptor 52K1 (314 aa).

The Extracellular segment spans residues 1 to 27 (MLPSNITSTHPAVFLLVGIPGLEHLHA). Residue N5 is glycosylated (N-linked (GlcNAc...) asparagine). A helical membrane pass occupies residues 28-48 (WISIPFCFAYTLALLGNCTLL). Topologically, residues 49–56 (FIIQADAA) are cytoplasmic. A helical membrane pass occupies residues 57–77 (LHEPMYLFLAMLATIDLVLSS). At 78–101 (TTLPKMLAIFWFRDQEINFFACLV) the chain is on the extracellular side. A disulfide bridge connects residues C99 and C191. Residues 102 to 122 (QMFFLHSFSIMESAVLLAMAF) form a helical membrane-spanning segment. The Cytoplasmic segment spans residues 123-141 (DRYVAICKPLHYTTVLTGS). The helical transmembrane segment at 142–162 (LITKIGMAAVARAVTLMTPLP) threads the bilayer. Residues 163–198 (FLLRRFHYCRGPVIAHCYCEHMAVVRLACGDTSFNN) lie on the Extracellular side of the membrane. Residues 199–219 (IYGIAVAMFIVVLDLLFVILS) traverse the membrane as a helical segment. At 220–239 (YVFILQAVLQLASQEARYKA) the chain is on the cytoplasmic side. A helical membrane pass occupies residues 240-260 (FGTCVSHIGAILSTYTPVVIS). Residues 261–275 (SVMHRVARHAAPRVH) are Extracellular-facing. Residues 276–296 (ILLAIFYLLFPPMVNPIIYGV) form a helical membrane-spanning segment. Topologically, residues 297 to 314 (KTKQIREYVLSLFQRKNM) are cytoplasmic.

It belongs to the G-protein coupled receptor 1 family.

The protein localises to the cell membrane. Functionally, odorant receptor. This Homo sapiens (Human) protein is Olfactory receptor 52K1 (OR52K1).